Consider the following 105-residue polypeptide: Death-associated protein 1 homolog (105 aa).

Residues 75–105 (AAQVAHQKPVPSAQKLPAGQHLNQHIHQPRK) form a disordered region. A compositionally biased stretch (polar residues) spans 95–105 (HLNQHIHQPRK).

Belongs to the DAP-DAPL1 family. As to quaternary structure, associates with ribosomes; inhibiting translation. Interacts with eiF5a (eif5a and eif5a2); inhibiting translation.

In terms of biological role, ribosome-binding protein involved in ribosome hibernation, a process during which ribosomes are stabilized in an inactive state and preserved from proteasomal degradation. Acts via its association with eiF5a (eif5a and eif5a2) at the polypeptide exit tunnel of the ribosome, preventing mRNA translation. Involved in ribosome hibernation in the mature egg by preventing mRNA translation, leading to ribosome inactivation. Ribosomes, which are produced in large quantities during oogenesis, are stored and translationally repressed in the egg and early embryo. Compared to dap1b, binds and inactivates ribosomes less efficiently. In Danio rerio (Zebrafish), this protein is Death-associated protein 1 homolog.